The chain runs to 115 residues: Con-Ins G1a (115 aa).

The signal sequence occupies residues 1-24 (MTTSSYFLLMALGLLLYVCQSSFG). The propeptide occupies 25-29 (NQHTR). A 4-hydroxyproline; partial modification is found at Pro34. Disulfide bonds link Cys38/Cys101, Cys50/Cys114, and Cys100/Cys105. Glu41 is subject to 4-carboxyglutamate. The propeptide at 53-94 (KRNDAGEKRGRASPLWQRRGSLSKLKARAKRNGAFHLPRDGR) is c peptide. Glu98 is subject to 4-carboxyglutamate. Pro104 is subject to 4-hydroxyproline; partial. Residue Glu109 is modified to 4-carboxyglutamate; partial. Cys114 is modified (cysteine amide).

Belongs to the insulin family. Heterodimer of A and B chains; disulfide-linked. As to expression, expressed by the venom gland.

It localises to the secreted. Its function is as follows. This venom insulin, from a fish-hunting cone snail, facilitates prey capture by rapidly inducing hypoglycemic shock. It is one of the smallest known insulin found in nature and lacks the C-terminal segment of the B chain that, in human insulin, mediates engagement of the insulin receptor (INSR) and assembly of the hormone's hexameric storage form. Despite lacking this segment, it both binds and activates human insulin receptor (long isoform (HIR-B)) with a high potency (EC(50)=16.28 nM). In vivo, intraperitoneal injection of this peptide into zebrafish lowers blood glucose with the same potency than human insulin. In addition, when applied to water, this peptide reduces overall locomotor activity of zebrafish larvae, observed as a significant decrease in the percentage of time spent swimming and movement frequency. When tested on a mouse model of diabetes, this insulin also lowers blood glucose with a 10-fold lower potency than human insulin. The polypeptide is Con-Ins G1a (Conus geographus (Geography cone)).